A 97-amino-acid chain; its full sequence is Protein SENESCENCE-ASSOCIATED GENE 21, mitochondrial (97 aa).

The transit peptide at 1-46 (MARSISNVKIVSAFVSRELSNAIFRRGYAATAAQGSVSSGGRSGAV) directs the protein to the mitochondrion.

Belongs to the LEA type 3 family. In terms of tissue distribution, expressed in roots, stems leaves and flowers, but not in seeds. In short days, observed in cotyledons and roots but absent from rosette leaves.

Its subcellular location is the mitochondrion. Functionally, mediates tolerance to oxidative stresses (e.g. hydrogen peroxide H(2)O(2), diamide, menadione and tert-butyl hydroperoxide) by minimizing the negative effects of oxidation and monitoring photosynthesis during stress. Promotes root development. Prevents premature aging (e.g. senescence and flowering). Involved in resistance against compatible pathogens such as Botrytis cinerea and Pseudomonas syringae pv. tomato. The sequence is that of Protein SENESCENCE-ASSOCIATED GENE 21, mitochondrial from Arabidopsis thaliana (Mouse-ear cress).